We begin with the raw amino-acid sequence, 110 residues long: Eukaryotic translation initiation factor eIF1 (110 aa).

Position 40 is a phosphothreonine (T40).

It belongs to the SUI1 family.

Functionally, probably involved in translation. The polypeptide is Eukaryotic translation initiation factor eIF1 (Drosophila melanogaster (Fruit fly)).